The chain runs to 581 residues: Arginine--tRNA ligase (581 aa).

Residues 131-141 (ANPTGPLHVGH) carry the 'HIGH' region motif.

It belongs to the class-I aminoacyl-tRNA synthetase family. In terms of assembly, monomer.

It localises to the cytoplasm. The catalysed reaction is tRNA(Arg) + L-arginine + ATP = L-arginyl-tRNA(Arg) + AMP + diphosphate. This chain is Arginine--tRNA ligase, found in Nitrosospira multiformis (strain ATCC 25196 / NCIMB 11849 / C 71).